The chain runs to 506 residues: Histidine ammonia-lyase (506 aa).

Residues 142 to 144 constitute a cross-link (5-imidazolinone (Ala-Gly)); it reads ASG. Position 143 is a 2,3-didehydroalanine (Ser) (Ser143).

Belongs to the PAL/histidase family. Contains an active site 4-methylidene-imidazol-5-one (MIO), which is formed autocatalytically by cyclization and dehydration of residues Ala-Ser-Gly.

The protein localises to the cytoplasm. It catalyses the reaction L-histidine = trans-urocanate + NH4(+). The protein operates within amino-acid degradation; L-histidine degradation into L-glutamate; N-formimidoyl-L-glutamate from L-histidine: step 1/3. The protein is Histidine ammonia-lyase of Bacillus cereus (strain B4264).